The chain runs to 85 residues: Homeobox protein knotted-1-like 4 (85 aa).

The ELK domain occupies 1 to 21; sequence ELKYQLLKKYSGYLSSLRQEF. The homeobox; TALE-type DNA-binding region spans 22 to 85; that stretch reads SKKKKKGKLP…NQRKRHWKPS (64 aa).

It belongs to the TALE/KNOX homeobox family. Strongly expressed in ear inflorescence primordia and shoot meristem. Weakly expressed in embryos. Absent from leaves.

The protein resides in the nucleus. Probably binds to the DNA sequence 5'-TGAC-3'. This chain is Homeobox protein knotted-1-like 4 (KNOX4), found in Zea mays (Maize).